The sequence spans 345 residues: Alkaline phosphatase isozyme conversion protein (345 aa).

The N-terminal stretch at Met-1–Ala-24 is a signal peptide. 4 residues coordinate Zn(2+): His-117, Asp-143, Glu-176, and Asp-204.

The protein belongs to the peptidase M28 family. M28C subfamily.

Its function is as follows. This protein, presumably an aminopeptidase, mediates the conversion of E.coli alkaline phosphatase isozyme 1, to isozymes 2 and 3 by removing, one by one, the two N-terminal arginine residues. The sequence is that of Alkaline phosphatase isozyme conversion protein (iap) from Escherichia coli (strain K12).